The primary structure comprises 480 residues: UDP-N-acetylmuramate--L-alanine ligase (480 aa).

129-135 (GTHGKTT) provides a ligand contact to ATP.

It belongs to the MurCDEF family.

It is found in the cytoplasm. The catalysed reaction is UDP-N-acetyl-alpha-D-muramate + L-alanine + ATP = UDP-N-acetyl-alpha-D-muramoyl-L-alanine + ADP + phosphate + H(+). It functions in the pathway cell wall biogenesis; peptidoglycan biosynthesis. In terms of biological role, cell wall formation. The polypeptide is UDP-N-acetylmuramate--L-alanine ligase (Mannheimia succiniciproducens (strain KCTC 0769BP / MBEL55E)).